The chain runs to 143 residues: 3-dehydroquinate dehydratase (143 aa).

Residue Tyr22 is the Proton acceptor of the active site. Residues Asn73, His79, and Asp86 each coordinate substrate. Residue His99 is the Proton donor of the active site. Substrate contacts are provided by residues 100–101 and Arg110; that span reads IS.

The protein belongs to the type-II 3-dehydroquinase family. Homododecamer.

It catalyses the reaction 3-dehydroquinate = 3-dehydroshikimate + H2O. Its pathway is metabolic intermediate biosynthesis; chorismate biosynthesis; chorismate from D-erythrose 4-phosphate and phosphoenolpyruvate: step 3/7. Its function is as follows. Catalyzes a trans-dehydration via an enolate intermediate. This Mycobacterium avium (strain 104) protein is 3-dehydroquinate dehydratase.